The following is a 553-amino-acid chain: LIM domain-containing protein B (553 aa).

The segment at 43–115 is disordered; that stretch reads LTYKDPNVST…SINNNISNNN (73 aa). The segment covering 99–114 has biased composition (low complexity); sequence GPGLPNNSINNNISNN. LIM zinc-binding domains lie at 205–262, 263–322, 328–387, 388–447, and 448–505; these read PICG…ELFS, PRCF…RQKR, EICS…KQIL, NICG…FFGR, and QCFK…LPKE. Positions 534 to 553 are disordered; sequence ELKKERERAAKEKEKESKAK.

It localises to the cytoplasm. Its subcellular location is the cell cortex. The protein resides in the cytoskeleton. Its function is as follows. Regulates and controls rearrangements of the actin cytoskeleton. Required for tip formation, morphogenesis, cell adhesion and motility, chemotaxis and aggregates formation. May function downstream of paxB. This chain is LIM domain-containing protein B (limB), found in Dictyostelium discoideum (Social amoeba).